The primary structure comprises 646 residues: Autophagy-related protein 28 (646 aa).

Disordered regions lie at residues 1 to 148 and 221 to 245; these read MSSP…HVDN and PTRS…RGLK. Over residues 12 to 21 the composition is skewed to polar residues; it reads SPRQRLSNPL. Low complexity predominate over residues 63 to 75; the sequence is SATSTRRSSSPAS. Residues 106 to 122 show a composition bias toward polar residues; sequence MMMNQHPSRQSTVSSHG. 2 coiled-coil regions span residues 283 to 350 and 485 to 514; these read LDKM…MEDV and QQAA…ESKH. 2 disordered regions span residues 475–494 and 546–612; these read SQAG…SQLS and AAAV…RGSA. Basic and acidic residues-rich tracts occupy residues 557-575 and 588-597; these read STDK…SHDE and RMEDHDHDPP.

The protein belongs to the ATG28 family.

The protein resides in the cytoplasm. The protein localises to the vacuole membrane. Its subcellular location is the cytoplasmic vesicle membrane. In terms of biological role, required for the autophagic degradation of peroxisomes called pexophagy, but not essential for general autophagy. Involved in resistance to elevated pH. This chain is Autophagy-related protein 28, found in Gibberella zeae (strain ATCC MYA-4620 / CBS 123657 / FGSC 9075 / NRRL 31084 / PH-1) (Wheat head blight fungus).